Consider the following 388-residue polypeptide: Tryptophan synthase beta chain 1 (388 aa).

The residue at position 82 (Lys-82) is an N6-(pyridoxal phosphate)lysine.

Belongs to the TrpB family. As to quaternary structure, tetramer of two alpha and two beta chains. Pyridoxal 5'-phosphate serves as cofactor.

It catalyses the reaction (1S,2R)-1-C-(indol-3-yl)glycerol 3-phosphate + L-serine = D-glyceraldehyde 3-phosphate + L-tryptophan + H2O. The protein operates within amino-acid biosynthesis; L-tryptophan biosynthesis; L-tryptophan from chorismate: step 5/5. Functionally, the beta subunit is responsible for the synthesis of L-tryptophan from indole and L-serine. The sequence is that of Tryptophan synthase beta chain 1 (trpB1) from Pyrococcus abyssi (strain GE5 / Orsay).